A 91-amino-acid chain; its full sequence is Protein YchS (91 aa).

This Escherichia coli O157:H7 protein is Protein YchS (ychS).